The chain runs to 791 residues: IQ motif and ubiquitin-like domain-containing protein (791 aa).

Residues 1–73 (MSNQQEKYEA…SDQSFSSLEP (73 aa)) form a disordered region. In terms of domain architecture, Ubiquitin-like spans 131-207 (ATVKVVLIPV…VQVEIFSTNP (77 aa)). The IQ domain occupies 338–367 (RLKAVIVIQTYYRQWHAKIFVENLRRQKSL).

Component of the axonemal radial spoke 1 (RS1) complex, at least composed of spoke head proteins RSPH1, RSPH3, RSPH9 and the cilia-specific component RSPH4A or sperm-specific component RSPH6A, spoke stalk proteins RSPH14, DNAJB13, DYDC1, ROPN1L and NME5, and the anchor protein IQUB. Does not appear to be part of radial spoke complexes 2 or 3 (RS2 or RS3). Interacts with CALM1. Interacts with DNAJB13. Interacts with DYNLL2. Interacts with NME5. Interacts with RSPH3. Interacts with RSPH9. Interacts with ZMYND10. Interacts with calmodulin; the interaction occurs in conditions of low but not high calcium.

The protein localises to the cytoplasm. The protein resides in the cytoskeleton. It localises to the flagellum axoneme. It is found in the cell projection. Its subcellular location is the cilium. Its function is as follows. Adapter protein that anchors the radial spoke 1 (RS1) complex to the A microtubule of outer doublet microtubules in axonemes. The triple radial spokes (RS1, RS2 and RS3) are required to modulate beating of the sperm flagellum. May play a role in inhibiting signaling via MAPK1/ERK2 and MAPK3/ERK1. Additionally, may play a role in the functioning of cilia. Not required for the functioning of tracheal or ependymal cilia. The chain is IQ motif and ubiquitin-like domain-containing protein (IQUB) from Homo sapiens (Human).